Here is a 206-residue protein sequence, read N- to C-terminus: Max dimerization protein 3 (206 aa).

Residues 8–25 (IQVLLQAAEFLERREREA) are interaction with SIN3A and SIN3B. Disordered stretches follow at residues 25–67 (AEHG…ELEK) and 146–171 (RERLRADSLDSSGLSSERSDSDQEEL). The bHLH domain maps to 57–109 (SGRSVHNELEKRRRAQLKRCLERLKQQMPLGADCARYTTLSLLRRARMHIQKL).

As to quaternary structure, efficient DNA binding requires dimerization with another bHLH protein. Binds DNA as a heterodimer with MAX. Interacts with SIN3A AND SIN3B. Interacts with RNF17.

The protein resides in the nucleus. Its function is as follows. Transcriptional repressor. Binds with MAX to form a sequence-specific DNA-binding protein complex which recognizes the core sequence 5'-CAC[GA]TG-3'. Antagonizes MYC transcriptional activity by competing for MAX and suppresses MYC dependent cell transformation. The sequence is that of Max dimerization protein 3 (MXD3) from Homo sapiens (Human).